The sequence spans 318 residues: Pheromone-regulated membrane protein 5 (318 aa).

The helical transmembrane segment at 78–98 (FIVVGGIAGVIFLAILLWWVI) threads the bilayer. The residue at position 129 (Ser-129) is a Phosphoserine. Low complexity predominate over residues 238–247 (TISSSSASSL). Positions 238–318 (TISSSSASSL…HMLEGKEQDE (81 aa)) are disordered. The segment covering 250 to 261 (GNEKEVGEDIRK) has biased composition (basic and acidic residues). Positions 276 to 285 (SPESDGSVNR) are enriched in polar residues. Residues Ser-279, Ser-282, and Ser-288 each carry the phosphoserine modification. The span at 309–318 (HMLEGKEQDE) shows a compositional bias: basic and acidic residues. Lys-314 participates in a covalent cross-link: Glycyl lysine isopeptide (Lys-Gly) (interchain with G-Cter in ubiquitin).

This sequence belongs to the PRM5 family.

It is found in the membrane. The polypeptide is Pheromone-regulated membrane protein 5 (PRM5) (Saccharomyces cerevisiae (strain Lalvin EC1118 / Prise de mousse) (Baker's yeast)).